A 124-amino-acid polypeptide reads, in one-letter code: uncharacterized protein (124 aa).

Residues 13 to 33 traverse the membrane as a helical segment; that stretch reads IIFMALYFVITGIVIRLIGYS.

It is found in the membrane. This is an uncharacterized protein from Bacillus anthracis.